The following is a 396-amino-acid chain: Tyrosine--tRNA ligase (396 aa).

Positions 43 to 52 match the 'HIGH' region motif; sequence PSSPDIHLGH. Residues 227-231 carry the 'KMSKS' region motif; that stretch reads KMSKS. An ATP-binding site is contributed by Lys230. The 59-residue stretch at 338-396 folds into the S4 RNA-binding domain; the sequence is ICVIDFIIKADLAKSKSEARRLLEQGGVEINSAKISDPGTTVKCGDIIKAGKRRYSKAV.

This sequence belongs to the class-I aminoacyl-tRNA synthetase family. TyrS type 2 subfamily. Homodimer.

The protein resides in the cytoplasm. The enzyme catalyses tRNA(Tyr) + L-tyrosine + ATP = L-tyrosyl-tRNA(Tyr) + AMP + diphosphate + H(+). Catalyzes the attachment of tyrosine to tRNA(Tyr) in a two-step reaction: tyrosine is first activated by ATP to form Tyr-AMP and then transferred to the acceptor end of tRNA(Tyr). The protein is Tyrosine--tRNA ligase of Dehalococcoides mccartyi (strain ATCC BAA-2266 / KCTC 15142 / 195) (Dehalococcoides ethenogenes (strain 195)).